Here is a 410-residue protein sequence, read N- to C-terminus: Cysteine desulfurase IscS (410 aa).

Pyridoxal 5'-phosphate-binding positions include Ala80–Thr81, Asn160, Gln188, and Ser208–His210. Lys211 bears the N6-(pyridoxal phosphate)lysine mark. Residue Thr248 coordinates pyridoxal 5'-phosphate. Cys334 functions as the Cysteine persulfide intermediate in the catalytic mechanism. Cys334 serves as a coordination point for [2Fe-2S] cluster.

This sequence belongs to the class-V pyridoxal-phosphate-dependent aminotransferase family. NifS/IscS subfamily. As to quaternary structure, homodimer. Forms a heterotetramer with IscU, interacts with other sulfur acceptors. The cofactor is pyridoxal 5'-phosphate.

The protein localises to the cytoplasm. It catalyses the reaction (sulfur carrier)-H + L-cysteine = (sulfur carrier)-SH + L-alanine. Its pathway is cofactor biosynthesis; iron-sulfur cluster biosynthesis. Master enzyme that delivers sulfur to a number of partners involved in Fe-S cluster assembly, tRNA modification or cofactor biosynthesis. Catalyzes the removal of elemental sulfur atoms from cysteine to produce alanine. Functions as a sulfur delivery protein for Fe-S cluster synthesis onto IscU, an Fe-S scaffold assembly protein, as well as other S acceptor proteins. The polypeptide is Cysteine desulfurase IscS (Rickettsia felis (strain ATCC VR-1525 / URRWXCal2) (Rickettsia azadi)).